Here is a 268-residue protein sequence, read N- to C-terminus: L-aspartate dehydrogenase (268 aa).

2 residues coordinate NAD(+): Ala-125 and Asn-191. His-221 is a catalytic residue.

This sequence belongs to the L-aspartate dehydrogenase family.

It carries out the reaction L-aspartate + NADP(+) + H2O = oxaloacetate + NH4(+) + NADPH + H(+). It catalyses the reaction L-aspartate + NAD(+) + H2O = oxaloacetate + NH4(+) + NADH + H(+). It functions in the pathway cofactor biosynthesis; NAD(+) biosynthesis; iminoaspartate from L-aspartate (dehydrogenase route): step 1/1. Specifically catalyzes the NAD or NADP-dependent dehydrogenation of L-aspartate to iminoaspartate. The chain is L-aspartate dehydrogenase from Ralstonia nicotianae (strain ATCC BAA-1114 / GMI1000) (Ralstonia solanacearum).